A 411-amino-acid chain; its full sequence is 2,3-bisphosphoglycerate-independent phosphoglycerate mutase (411 aa).

Belongs to the BPG-independent phosphoglycerate mutase family. A-PGAM subfamily.

The enzyme catalyses (2R)-2-phosphoglycerate = (2R)-3-phosphoglycerate. It participates in carbohydrate degradation; glycolysis; pyruvate from D-glyceraldehyde 3-phosphate: step 3/5. In terms of biological role, catalyzes the interconversion of 2-phosphoglycerate and 3-phosphoglycerate. This Thermococcus gammatolerans (strain DSM 15229 / JCM 11827 / EJ3) protein is 2,3-bisphosphoglycerate-independent phosphoglycerate mutase.